We begin with the raw amino-acid sequence, 127 residues long: MSIPNHLRYSEEHEWVKTEGNQVVIGITHFAQSELGDIVFVELPEVGATLEANEPFGSVESVKTVSELYAPVSGKVVAVNEELSDQPELVNESPYEGAWMVKVELSDASEVEKLLTAEKYAEMTNQD.

The region spanning 22-104 (QVVIGITHFA…YEGAWMVKVE (83 aa)) is the Lipoyl-binding domain. Position 63 is an N6-lipoyllysine (K63).

It belongs to the GcvH family. The glycine cleavage system is composed of four proteins: P, T, L and H. (R)-lipoate is required as a cofactor.

In terms of biological role, the glycine cleavage system catalyzes the degradation of glycine. The H protein shuttles the methylamine group of glycine from the P protein to the T protein. Functionally, is also involved in protein lipoylation via its role as an octanoyl/lipoyl carrier protein intermediate. This is Glycine cleavage system H protein from Bacillus cytotoxicus (strain DSM 22905 / CIP 110041 / 391-98 / NVH 391-98).